A 77-amino-acid chain; its full sequence is UPF0401 protein UTI89_C4989 (77 aa).

The protein belongs to the UPF0401 family.

The polypeptide is UPF0401 protein UTI89_C4989 (Escherichia coli (strain UTI89 / UPEC)).